Reading from the N-terminus, the 1088-residue chain is V-type proton ATPase catalytic subunit A (1088 aa).

257-264 serves as a coordination point for ATP; that stretch reads GAFGCGKT. The DOD-type homing endonuclease domain maps to 485–662; the sequence is LLGTWAGIGN…LVKIAHSLGI (178 aa).

This sequence belongs to the ATPase alpha/beta chains family. In terms of assembly, V-ATPase is a heteromultimeric enzyme composed of a peripheral catalytic V1 complex (components A to H) attached to an integral membrane V0 proton pore complex (components: a, c, c', c'', d, e, f and VOA1). Post-translationally, this protein undergoes a protein self splicing that involves a post-translational excision of the VDE intervening region (intein) followed by peptide ligation.

It is found in the vacuole membrane. It carries out the reaction ATP + H2O + 4 H(+)(in) = ADP + phosphate + 5 H(+)(out). Functionally, catalytic subunit of the V1 complex of vacuolar(H+)-ATPase (V-ATPase), a multisubunit enzyme composed of a peripheral complex (V1) that hydrolyzes ATP and a membrane integral complex (V0) that translocates protons. V-ATPase is responsible for acidifying and maintaining the pH of intracellular compartments. VDE is an endonuclease that can cleave at a site present in a VMA1 allele that lacks the derived endonuclease segment of the open reading frame; cleavage at this site only occurs during meiosis and initiates 'homing', a genetic event that converts a VMA1 allele lacking VDE into one that contains it. This is V-type proton ATPase catalytic subunit A (VMA1) from Candida tropicalis (Yeast).